We begin with the raw amino-acid sequence, 486 residues long: Cysteine--tRNA ligase (486 aa).

Zn(2+) is bound at residue Cys-30. Positions 32–42 (PTVYDRAHLGN) match the 'HIGH' region motif. Zn(2+)-binding residues include Cys-221, His-246, and Glu-250. The 'KMSKS' region motif lies at 279 to 283 (KMSKS). An ATP-binding site is contributed by Lys-282.

It belongs to the class-I aminoacyl-tRNA synthetase family. In terms of assembly, monomer. The cofactor is Zn(2+).

Its subcellular location is the cytoplasm. The catalysed reaction is tRNA(Cys) + L-cysteine + ATP = L-cysteinyl-tRNA(Cys) + AMP + diphosphate. The chain is Cysteine--tRNA ligase from Cereibacter sphaeroides (strain ATCC 17025 / ATH 2.4.3) (Rhodobacter sphaeroides).